The sequence spans 358 residues: Alanine racemase, biosynthetic (358 aa).

Catalysis depends on Lys-34, which acts as the Proton acceptor; specific for D-alanine. N6-(pyridoxal phosphate)lysine is present on Lys-34. Arg-130 contacts substrate. Tyr-254 acts as the Proton acceptor; specific for L-alanine in catalysis. Substrate is bound at residue Met-302.

This sequence belongs to the alanine racemase family. Pyridoxal 5'-phosphate is required as a cofactor.

It carries out the reaction L-alanine = D-alanine. It functions in the pathway amino-acid biosynthesis; D-alanine biosynthesis; D-alanine from L-alanine: step 1/1. The protein operates within cell wall biogenesis; peptidoglycan biosynthesis. Its function is as follows. Catalyzes the interconversion of L-alanine and D-alanine. Provides the D-alanine required for cell wall biosynthesis. The polypeptide is Alanine racemase, biosynthetic (alr) (Pseudomonas aeruginosa (strain ATCC 15692 / DSM 22644 / CIP 104116 / JCM 14847 / LMG 12228 / 1C / PRS 101 / PAO1)).